The following is a 32-amino-acid chain: Acetolactate synthase, catabolic (32 aa).

This sequence belongs to the TPP enzyme family. As to quaternary structure, homodimer.

It carries out the reaction 2 pyruvate + H(+) = (2S)-2-acetolactate + CO2. It participates in polyol metabolism; (R,R)-butane-2,3-diol biosynthesis; (R,R)-butane-2,3-diol from pyruvate: step 1/3. This Klebsiella aerogenes (Enterobacter aerogenes) protein is Acetolactate synthase, catabolic (budB).